A 388-amino-acid chain; its full sequence is F-box/LRR-repeat protein At3g59190 (388 aa).

The F-box domain maps to 11-64 (KDIISNLPDALLCHVLSFLPTTEAASTSVLAKRWRFLLAFVPNLDLDNMIYDRP). 5 LRR repeats span residues 151-177 (KVSGTDEFTIDVGEFFLPKLKTLHLSA), 180-205 (FGDEGGPPFAKLISACHALEELVMIK), 228-252 (CENIDENPKSVSFDTPNLVYLEFTD), 313-345 (TMYLSSEALEVLTFCCKKAIPVFNNLIHLTVET), and 346-371 (DERVDWESLPILLKNCPNLETLIFEV).

This Arabidopsis thaliana (Mouse-ear cress) protein is F-box/LRR-repeat protein At3g59190.